We begin with the raw amino-acid sequence, 251 residues long: Myozenin-3 (251 aa).

Serine 31 carries the phosphoserine modification. The interval leucine 50–alanine 67 is binding to ACTN2, PPP3CA and TCAP. A binding to FLNC region spans residues alanine 67–proline 110. The tract at residues arginine 79 to tyrosine 102 is disordered. Residues proline 186–glycine 207 are binding to ACTN2.

It belongs to the myozenin family. As to quaternary structure, interacts with ACTN2, LDB3, FLNC, PPP3CA and TCAP. Expressed specifically in skeletal muscle. Not detected in heart.

The protein resides in the cytoplasm. It localises to the myofibril. The protein localises to the sarcomere. It is found in the z line. Myozenins may serve as intracellular binding proteins involved in linking Z line proteins such as alpha-actinin, gamma-filamin, TCAP/telethonin, LDB3/ZASP and localizing calcineurin signaling to the sarcomere. Plays an important role in the modulation of calcineurin signaling. May play a role in myofibrillogenesis. In Homo sapiens (Human), this protein is Myozenin-3.